The chain runs to 539 residues: 3-methylmercaptopropionyl-CoA ligase (539 aa).

Threonine 185 is a Mg(2+) binding site. 5 residues coordinate ATP: histidine 231, glycine 303, histidine 324, alanine 325, and serine 329. Glutamate 330 provides a ligand contact to Mg(2+). The ATP site is built by glutamine 359, aspartate 417, arginine 432, and lysine 523.

The protein belongs to the ATP-dependent AMP-binding enzyme family. Homodimer. Mg(2+) is required as a cofactor.

The catalysed reaction is 3-(methylsulfanyl)propanoate + ATP + CoA = 3-(methylsulfanyl)propanoyl-CoA + AMP + diphosphate. With respect to regulation, ADP acts as a competitive inhibitor and inhibits the ligase activity. Its function is as follows. Involved in the assimilation of dimethylsulphoniopropionate (DMSP), an important compound in the fixation of carbon in marine phytoplankton. Catalyzes the ATP-dependent ligation of methylmercaptopropionate (MMPA) and CoA to yield methylmercaptopropionate-CoA (MMPA-CoA). In Ruegeria lacuscaerulensis (strain DSM 11314 / KCTC 2953 / ITI-1157) (Silicibacter lacuscaerulensis), this protein is 3-methylmercaptopropionyl-CoA ligase.